The primary structure comprises 507 residues: Probable Xaa-Pro aminopeptidase HCBG_01484 (507 aa).

Mn(2+) contacts are provided by Asp-283, Asp-294, Glu-431, and Glu-469.

The protein belongs to the peptidase M24B family. The cofactor is Mn(2+).

It carries out the reaction Release of any N-terminal amino acid, including proline, that is linked to proline, even from a dipeptide or tripeptide.. Catalyzes the removal of a penultimate prolyl residue from the N-termini of peptides. This is Probable Xaa-Pro aminopeptidase HCBG_01484 from Ajellomyces capsulatus (strain G186AR / H82 / ATCC MYA-2454 / RMSCC 2432) (Darling's disease fungus).